We begin with the raw amino-acid sequence, 205 residues long: Latherin (205 aa).

A disulfide bridge links cysteine 133 with cysteine 176.

The protein belongs to the BPI/LBP/Plunc superfamily. Plunc family. In terms of assembly, monomer.

It localises to the secreted. Its function is as follows. Major protein in sweat, has surfactant properties. This Equus quagga burchellii (Burchell's zebra) protein is Latherin (LATH).